The primary structure comprises 144 residues: MNITTNGTTILTRSSIIIGVIILVASGLGPLHRSIHRGVEREVECLYRRLHNRILRLNHYVFLIYTVSLTKMVGTLAIAVRGHPGRRGHSDHLTRSIWIKTVRLVILDAIPTYRFCPVAPDLSLPALGASRRLPHFSHLHVHHD.

The next 2 membrane-spanning stretches (helical) occupy residues 10 to 30 (ILTRSSIIIGVIILVASGLGP) and 60 to 80 (YVFLIYTVSLTKMVGTLAIAV).

It localises to the membrane. This is an uncharacterized protein from Saccharomyces cerevisiae (strain ATCC 204508 / S288c) (Baker's yeast).